The chain runs to 107 residues: Early E3A 12.5 kDa protein (107 aa).

The protein belongs to the adenoviridae E3A-2 family.

This Homo sapiens (Human) protein is Early E3A 12.5 kDa protein.